Consider the following 364-residue polypeptide: Zinc finger protein 474 (364 aa).

Positions 1-10 (MERGKKKRIS) are enriched in basic residues. Disordered regions lie at residues 1–21 (MERG…HHSK) and 37–60 (SYSS…DTQK). A C2HC/C3H-type 1 zinc finger spans residues 93–122 (GFRVCYICGREFGSQSIAIHEPQCLQKWHI). Residues C97, C100, H112, and C116 each contribute to the Zn(2+) site. The interval 127–147 (LPKHLRRPEPSKPQSLSSSGS) is disordered. Low complexity predominate over residues 138-147 (KPQSLSSSGS). 3 C2HC/C3H-type zinc fingers span residues 164–193 (QLLP…KGEG), 220–249 (RTVI…KWKM), and 283–312 (QLVF…HPYG). Zn(2+) contacts are provided by C168, C171, H183, C187, C224, C227, H239, C243, C287, C290, H302, and C306. Residues 187–214 (CKPKGEGPRAPHSNSSDHLTGLKKACSG) are disordered.

Zn(2+) serves as cofactor.

This Homo sapiens (Human) protein is Zinc finger protein 474 (ZNF474).